The following is a 406-amino-acid chain: LIM/homeobox protein Lhx1 (406 aa).

2 consecutive LIM zinc-binding domains span residues 4–54 (CAGC…CKND) and 63–117 (CAGC…CKED). 2 disordered regions span residues 128-189 (NSLH…TIKA) and 294-372 (DFFP…SAEV). Residues 137 to 148 (SDPSLSPDSQDP) show a composition bias toward low complexity. Residues 151-167 (DDAKDSESANVSDKEGG) are compositionally biased toward basic and acidic residues. The residue at position 162 (serine 162) is a Phosphoserine. A DNA-binding region (homeobox) is located at residues 180–239 (RRGPRTTIKAKQLETLKAAFAATPKPTRHIREQLAQETGLNMRVIQVWFQNRRSKERRMK). The span at 315 to 327 (PSSGPSGTPLGGL) shows a compositional bias: low complexity. Residues 352-362 (GDSPSPEPSLP) are compositionally biased toward pro residues.

As to quaternary structure, interacts with LDB1 via the tandem LIM domains.

The protein localises to the nucleus. Functionally, potential transcription factor. May play a role in early mesoderm formation and later in lateral mesoderm differentiation and neurogenesis. The polypeptide is LIM/homeobox protein Lhx1 (Lhx1) (Mesocricetus auratus (Golden hamster)).